Reading from the N-terminus, the 361-residue chain is Homocitrate synthase (361 aa).

Residues 1–251 (MVLDSTLREG…KYRLDLLYRV (251 aa)) form the Pyruvate carboxyltransferase domain. R8 is a binding site for 2-oxoglutarate. E9 serves as a coordination point for Mg(2+). Positions 68, 128, and 162 each coordinate 2-oxoglutarate. Residues H188 and H190 each contribute to the Mg(2+) site. The Proton acceptor role is filled by H282.

It belongs to the alpha-IPM synthase/homocitrate synthase family. Homocitrate synthase LYS20/LYS21 subfamily. Requires Mg(2+) as cofactor. It depends on Mn(2+) as a cofactor.

It carries out the reaction acetyl-CoA + 2-oxoglutarate + H2O = (2R)-homocitrate + CoA + H(+). Its pathway is amino-acid biosynthesis; L-lysine biosynthesis via AAA pathway; L-alpha-aminoadipate from 2-oxoglutarate: step 1/5. Functionally, catalyzes the aldol-type condensation of 2-oxoglutarate with acetyl-CoA to yield homocitrate. Carries out the first step of the alpha-aminoadipate (AAA) lysine biosynthesis pathway. The polypeptide is Homocitrate synthase (Pyrococcus abyssi (strain GE5 / Orsay)).